The primary structure comprises 532 residues: 4-amino-L-phenylalanyl-[CmlP-peptidyl-carrier-protein] 3-hydroxylase (532 aa).

Fe cation-binding residues include His305, His307, Asp309, His310, Glu377, and Asp403.

The protein belongs to the metallo-beta-lactamase superfamily. In terms of assembly, homodimer. It depends on Fe(2+) as a cofactor.

It carries out the reaction 4-amino-L-phenylalanyl-[peptidyl-carrier protein] + AH2 + O2 = (2R)-2-(4-aminophenyl)-L-seryl-[peptidyl-carrier protein] + A + H2O. It functions in the pathway antibiotic biosynthesis. Involved in chloramphenicol biosynthesis. Catalyzes the beta-hydroxylation of 4-amino-L-phenylalanine (L-PAPA) covalently bound to CmlP to form L-p-aminophenylserine. The chain is 4-amino-L-phenylalanyl-[CmlP-peptidyl-carrier-protein] 3-hydroxylase from Streptomyces venezuelae (strain ATCC 10712 / CBS 650.69 / DSM 40230 / JCM 4526 / NBRC 13096 / PD 04745).